A 210-amino-acid chain; its full sequence is tRNA (guanine-N(7)-)-methyltransferase (210 aa).

Positions 36, 61, 90, and 112 each coordinate S-adenosyl-L-methionine. The active site involves Asp-112. Residues Lys-116, Asp-148, and 188-191 (TEYE) contribute to the substrate site.

It belongs to the class I-like SAM-binding methyltransferase superfamily. TrmB family.

It catalyses the reaction guanosine(46) in tRNA + S-adenosyl-L-methionine = N(7)-methylguanosine(46) in tRNA + S-adenosyl-L-homocysteine. It functions in the pathway tRNA modification; N(7)-methylguanine-tRNA biosynthesis. Its function is as follows. Catalyzes the formation of N(7)-methylguanine at position 46 (m7G46) in tRNA. The chain is tRNA (guanine-N(7)-)-methyltransferase from Mycoplasma pneumoniae (strain ATCC 29342 / M129 / Subtype 1) (Mycoplasmoides pneumoniae).